A 477-amino-acid polypeptide reads, in one-letter code: Putative 4-(hydroxymethyl)benzenesulfonate dehydrogenase TsaD2 (477 aa).

NAD(+) contacts are provided by residues 154–155, 178–181, and 230–231; these read WN, KAAE, and GS. The Proton acceptor role is filled by Glu252. Leu253 serves as a coordination point for NAD(+). Cys286 acts as the Nucleophile in catalysis. An NAD(+)-binding site is contributed by Glu381.

Belongs to the aldehyde dehydrogenase family. As to quaternary structure, homodimer.

The catalysed reaction is 4-(hydroxymethyl)benzenesulfonate + NAD(+) = 4-formylbenzenesulfonate + NADH + H(+). Involved in the toluene-4-sulfonate degradation pathway. Does not discriminate between the sulfonate and the carboxyl substituents and can also be involved in the p-toluenecarboxylate degradation pathway. This Comamonas testosteroni (Pseudomonas testosteroni) protein is Putative 4-(hydroxymethyl)benzenesulfonate dehydrogenase TsaD2 (tsaD2).